A 53-amino-acid polypeptide reads, in one-letter code: ATP synthase protein 8 (53 aa).

The chain crosses the membrane as a helical span at residues 4–24 (MAPISWLLLFIIFSITFILFC).

Belongs to the ATPase protein 8 family. As to quaternary structure, F-type ATPases have 2 components, CF(1) - the catalytic core - and CF(0) - the membrane proton channel.

Its subcellular location is the mitochondrion membrane. In terms of biological role, mitochondrial membrane ATP synthase (F(1)F(0) ATP synthase or Complex V) produces ATP from ADP in the presence of a proton gradient across the membrane which is generated by electron transport complexes of the respiratory chain. F-type ATPases consist of two structural domains, F(1) - containing the extramembraneous catalytic core and F(0) - containing the membrane proton channel, linked together by a central stalk and a peripheral stalk. During catalysis, ATP synthesis in the catalytic domain of F(1) is coupled via a rotary mechanism of the central stalk subunits to proton translocation. Part of the complex F(0) domain. Minor subunit located with subunit a in the membrane. This is ATP synthase protein 8 (mt:ATPase8) from Drosophila mauritiana (Fruit fly).